The following is a 288-amino-acid chain: 2-dehydro-3-deoxyphosphooctonate aldolase (288 aa).

Belongs to the KdsA family.

The protein localises to the cytoplasm. It catalyses the reaction D-arabinose 5-phosphate + phosphoenolpyruvate + H2O = 3-deoxy-alpha-D-manno-2-octulosonate-8-phosphate + phosphate. Its pathway is carbohydrate biosynthesis; 3-deoxy-D-manno-octulosonate biosynthesis; 3-deoxy-D-manno-octulosonate from D-ribulose 5-phosphate: step 2/3. It functions in the pathway bacterial outer membrane biogenesis; lipopolysaccharide biosynthesis. This is 2-dehydro-3-deoxyphosphooctonate aldolase from Bdellovibrio bacteriovorus (strain ATCC 15356 / DSM 50701 / NCIMB 9529 / HD100).